The primary structure comprises 508 residues: Protein adenylyltransferase fic-1 (508 aa).

A helical membrane pass occupies residues Thr-44–Val-64. 2 TPR repeats span residues Ala-147 to Asn-180 and Pro-181 to Asn-214. The Inhibitory (S/T)XXXE(G/N) motif motif lies at Thr-270–Gly-275. Glu-274 is a binding site for ATP. In terms of domain architecture, Fido spans Ile-326–Lys-461. Position 352 is an O-AMP-threonine; by autocatalysis (Thr-352). Position 357-360 (Val-357–Phe-360) interacts with ATP. Residue His-404 is part of the active site. ATP-binding positions include Asp-408–Arg-415, Tyr-440–Tyr-441, and Asn-448. Thr-476 is modified (O-AMP-threonine; by autocatalysis). Residues Leu-482 to Asn-508 are disordered. Residues Val-496 to Asn-508 show a composition bias toward basic and acidic residues.

Belongs to the fic family. Forms homodimers; homodimerization might be required for adenylyltransferase activity. Ubiquitously expressed, with high expression in the germline.

The protein resides in the endoplasmic reticulum membrane. The protein localises to the nucleus membrane. The catalysed reaction is L-tyrosyl-[protein] + ATP = O-(5'-adenylyl)-L-tyrosyl-[protein] + diphosphate. The enzyme catalyses L-threonyl-[protein] + ATP = 3-O-(5'-adenylyl)-L-threonyl-[protein] + diphosphate. It carries out the reaction 3-O-(5'-adenylyl)-L-threonyl-[protein] + H2O = L-threonyl-[protein] + AMP + H(+). The side chain of Glu-274 determines which of the two opposing activities (AMPylase or de-AMPylase) will take place. In response to endoplasmic reticulum stress, mediates de-AMPylase activity. Adenylyltransferase activity is inhibited by the inhibitory helix present at the N-terminus: Glu-274 binds ATP and competes with ATP-binding at Arg-415, thereby preventing adenylyltransferase activity. In unstressed cells, disengagement of Glu-274 promotes adenylyltransferase activity. Activation dissociates ATP-binding from Glu-274, allowing ordered binding of the entire ATP moiety with the alpha-phosphate in an orientation that is productive for accepting an incoming target hydroxyl side chain. In terms of biological role, protein that can both mediate the addition of adenosine 5'-monophosphate (AMP) to specific residues of target proteins (AMPylation), and the removal of the same modification from target proteins (de-AMPylation), depending on the context. The side chain of Glu-274 determines which of the two opposing activities (AMPylase or de-AMPylase) will take place. Adenylyltransferase that mediates the addition of adenosine 5'-monophosphate (AMP) to specific residues of target proteins. In vivo target proteins include the heat-shock 70 family proteins hsp-1 and hsp-3 and the translation elongation factors eef-1A, eef-1G and eef-2. Can AMPylate core histone H3 in vitro. Can also act as a phosphodiesterase by mediating removal of ATP (de-AMPylation) from target proteins. Decreases susceptibility to P.aeruginosa-mediated killing and might therefore play a role in the innate immune response. This chain is Protein adenylyltransferase fic-1, found in Caenorhabditis elegans.